The primary structure comprises 408 residues: Argininosuccinate synthase (408 aa).

Residues 10-18 (AYSGGLDTS) and Ala37 each bind ATP. L-citrulline is bound by residues Tyr90 and Ser95. Gly120 is a binding site for ATP. 3 residues coordinate L-aspartate: Thr122, Asn126, and Asp127. Asn126 contacts L-citrulline. L-citrulline contacts are provided by Arg130, Ser181, Ser190, Glu266, and Tyr278.

It belongs to the argininosuccinate synthase family. Type 1 subfamily. As to quaternary structure, homotetramer.

The protein resides in the cytoplasm. The catalysed reaction is L-citrulline + L-aspartate + ATP = 2-(N(omega)-L-arginino)succinate + AMP + diphosphate + H(+). Its pathway is amino-acid biosynthesis; L-arginine biosynthesis; L-arginine from L-ornithine and carbamoyl phosphate: step 2/3. The sequence is that of Argininosuccinate synthase from Cereibacter sphaeroides (strain ATCC 17025 / ATH 2.4.3) (Rhodobacter sphaeroides).